The chain runs to 512 residues: NADH-quinone oxidoreductase subunit N (512 aa).

14 helical membrane passes run 32–52, 57–77, 97–117, 126–146, 151–171, 186–206, 231–251, 264–284, 296–316, 324–344, 348–368, 392–412, 431–451, and 473–493; these read VLPA…SVLF, FIIV…AVFY, VLSF…AAIV, IEFP…TLMT, FILV…LIGM, FLLG…LFGG, IGLV…PYHA, VTGY…LILY, WAWL…LLAL, MLAY…SAGI, VLFY…ILAY, AIAI…GGFW, ILLI…LRIG, and VGVT…WFLL.

This sequence belongs to the complex I subunit 2 family. In terms of assembly, NDH-1 is composed of 14 different subunits. Subunits NuoA, H, J, K, L, M, N constitute the membrane sector of the complex.

It is found in the cell inner membrane. The catalysed reaction is a quinone + NADH + 5 H(+)(in) = a quinol + NAD(+) + 4 H(+)(out). Functionally, NDH-1 shuttles electrons from NADH, via FMN and iron-sulfur (Fe-S) centers, to quinones in the respiratory chain. The immediate electron acceptor for the enzyme in this species is believed to be ubiquinone. Couples the redox reaction to proton translocation (for every two electrons transferred, four hydrogen ions are translocated across the cytoplasmic membrane), and thus conserves the redox energy in a proton gradient. This Leptospira interrogans serogroup Icterohaemorrhagiae serovar Lai (strain 56601) protein is NADH-quinone oxidoreductase subunit N.